Reading from the N-terminus, the 298-residue chain is Dioxygenase aneA (298 aa).

Fe cation is bound by residues histidine 134, aspartate 136, and histidine 213.

It belongs to the PhyH family. In terms of assembly, homodimer. The cofactor is Fe cation.

It carries out the reaction aculene D + 2-oxoglutarate + O2 = aculene C + succinate + CO2 + H2O. The catalysed reaction is aculene B + 2-oxoglutarate + O2 = aculene A + succinate + CO2 + H2O. It participates in secondary metabolite biosynthesis. Dioxygenase; part of the gene cluster that mediates the biosynthesis of aculenes, a unique type of norsesquiterpenes that contain a nordaucane skeleton linked to an L-proline moiety and are of mixed biosynthetic origin. The pathway begins with the synthesis of dauca-4,7-diene by the terpene cyclase aneC using farnesyl pyrophosphate (FPP) as substrate. The cytochrome P450 monooxygenase aneF then performs the initial oxidation at C-12 of dauca-4,7-diene to yield asperaculane D. Asperaculane D is substrate of the cytochrome P450 monooxygenase aneD for C-10 hydroxylation to yield asperaculane E. The cytochrome P450 monooxygenase aneG then converts asperaculane E into aculene D via C-2 oxidation. The monomodular nonribosomal peptide synthase aneB adenylates L-proline and the thiohydrolase aneE transfers this activated L-proline derivative to aculenes D and C to produce respectively aculenes B and A. The dioxygenase aneA converts aculene D into aculene C, and aculene B into aculene A by introducing the 5,6-alkene moiety. Asperculanes A, B, C and F, as well as 14-prolyl asperculane C, might be shunt products of the pathway. This is Dioxygenase aneA from Aspergillus aculeatus (strain ATCC 16872 / CBS 172.66 / WB 5094).